A 442-amino-acid chain; its full sequence is C4-dicarboxylate transport protein (442 aa).

Transmembrane regions (helical) follow at residues 13-33 (VLYFQVLTAVVIGVLLGHFYP), 49-69 (GIKMLIAPIIFCTVVLGIAGM), 81-101 (LALLYFEIVSTIALMVGLVVV), 149-169 (AFAKGEILQVLFIAILFGFAL), 193-213 (MIAIIMKFAPIGAFGAMAFTI), 227-247 (LMGSFYLTCLLFVFIVLGIIA), 312-332 (IYLTMAAVFIAQATNTPMTLL), 336-356 (TLLAVLLLTSKGAAGVTGSGF), and 357-377 (IVLAATLSAVGDVPVAGLAII).

Belongs to the dicarboxylate/amino acid:cation symporter (DAACS) (TC 2.A.23) family.

It localises to the cell membrane. Its function is as follows. Responsible for the transport of dicarboxylates such as succinate, fumarate, and malate across the membrane. The polypeptide is C4-dicarboxylate transport protein (Polynucleobacter asymbioticus (strain DSM 18221 / CIP 109841 / QLW-P1DMWA-1) (Polynucleobacter necessarius subsp. asymbioticus)).